We begin with the raw amino-acid sequence, 103 residues long: Small ribosomal subunit protein uS10 (103 aa).

It belongs to the universal ribosomal protein uS10 family. As to quaternary structure, part of the 30S ribosomal subunit.

Its function is as follows. Involved in the binding of tRNA to the ribosomes. This is Small ribosomal subunit protein uS10 from Verminephrobacter eiseniae (strain EF01-2).